A 211-amino-acid polypeptide reads, in one-letter code: Uracil phosphoribosyltransferase (211 aa).

5-phospho-alpha-D-ribose 1-diphosphate is bound by residues R78, R103, and 130–138 (DPMLATGSS). Uracil is bound by residues I193 and 198 to 200 (GDA). D199 lines the 5-phospho-alpha-D-ribose 1-diphosphate pocket.

It belongs to the UPRTase family. Mg(2+) is required as a cofactor.

It carries out the reaction UMP + diphosphate = 5-phospho-alpha-D-ribose 1-diphosphate + uracil. It functions in the pathway pyrimidine metabolism; UMP biosynthesis via salvage pathway; UMP from uracil: step 1/1. Allosterically activated by GTP. Its function is as follows. Catalyzes the conversion of uracil and 5-phospho-alpha-D-ribose 1-diphosphate (PRPP) to UMP and diphosphate. The polypeptide is Uracil phosphoribosyltransferase (Acinetobacter baylyi (strain ATCC 33305 / BD413 / ADP1)).